A 654-amino-acid chain; its full sequence is Acetyl-coenzyme A synthetase (654 aa).

CoA-binding positions include 190–193 (RGGK) and Thr313. ATP-binding positions include 389–391 (GEP), 413–418 (DTWWQT), Asp504, and Arg519. Ser527 is a CoA binding site. Arg530 is an ATP binding site. 2 residues coordinate Mg(2+): Val541 and Val546. N6-acetyllysine is present on Lys613.

This sequence belongs to the ATP-dependent AMP-binding enzyme family. Mg(2+) serves as cofactor. Acetylated. Deacetylation by the SIR2-homolog deacetylase activates the enzyme.

It carries out the reaction acetate + ATP + CoA = acetyl-CoA + AMP + diphosphate. Its function is as follows. Catalyzes the conversion of acetate into acetyl-CoA (AcCoA), an essential intermediate at the junction of anabolic and catabolic pathways. AcsA undergoes a two-step reaction. In the first half reaction, AcsA combines acetate with ATP to form acetyl-adenylate (AcAMP) intermediate. In the second half reaction, it can then transfer the acetyl group from AcAMP to the sulfhydryl group of CoA, forming the product AcCoA. The polypeptide is Acetyl-coenzyme A synthetase (Leptospira borgpetersenii serovar Hardjo-bovis (strain JB197)).